Reading from the N-terminus, the 377-residue chain is MRVGIPTEIKVQEFRVGITPAGVHALKEAGHTVLVQKGAGLGSMITDEEYVAAGAQMVATAKECWDCDMVVKVKEPLAPEYDLFHEGLILYTYLHLAPEPALTKALLEKKVIGIAYETVQFDNGFLPLLAPMSEVAGRMATQVGAQMLTKIEGGMGLLMGGTAGVQAAHVVILGAGTVGLSAAKVAMGMGARVTILDSNLFRLRQIDDLFGGRIQTLASNAFNIAAATKDADLLVGSVLIPGALTPKLVTEAMVKTMKPGSAIVDVAIDQGGCIEPTAKHGATYHDKPTFKYPVNGGEVVCYSVGNMPGAVARTSTFTLTNATMPYMVDLANKGWKKACQDDKALARGINTYDGKVYFKGVSDALGYELHCTCDILK.

2 residues coordinate substrate: arginine 15 and lysine 74. The active-site Proton donor/acceptor is the histidine 95. NAD(+)-binding positions include serine 133, aspartate 197, arginine 202, serine 219, 238-239 (VL), 266-269 (VAID), and 304-307 (VGNM). Aspartate 269 (proton donor/acceptor) is an active-site residue.

This sequence belongs to the AlaDH/PNT family. In terms of assembly, homohexamer.

The enzyme catalyses L-alanine + NAD(+) + H2O = pyruvate + NH4(+) + NADH + H(+). The protein operates within organosulfur degradation; alkanesulfonate degradation. Functionally, involved in an anaerobic respiration pathway that converts the sulfonate taurine (2-aminoethanesulfonate) to ammonia, acetate and sulfide. Acts as an alanine dehydrogenase that regenerates pyruvate, the amino group acceptor for the taurine--pyruvate aminotransferase enzyme, and liberates ammonia. The polypeptide is Alanine dehydrogenase (Bilophila wadsworthia (strain 3_1_6)).